A 329-amino-acid polypeptide reads, in one-letter code: Olfactory receptor 52L1 (329 aa).

Topologically, residues 1-43 (MTLVSFFSFLSKPLIMLLSNSSWRLSQPSFLLVGIPGLEESQH) are extracellular. N20 is a glycosylation site (N-linked (GlcNAc...) asparagine). The chain crosses the membrane as a helical span at residues 44-64 (WIALPLGILYLLALVGNVTIL). The Cytoplasmic portion of the chain corresponds to 65–72 (FIIWMDPS). The helical transmembrane segment at 73-93 (LHQSMYLFLSMLAAIDLVLAS) threads the bilayer. The Extracellular segment spans residues 94 to 117 (STAPKALAVLLVHAHEIGYIVCLI). C115 and C207 are disulfide-bonded. Residues 118–138 (QMFFIHAFSSMESGVLVAMAL) form a helical membrane-spanning segment. Residues 139 to 157 (DRYVAICHPLHHSTILHPG) are Cytoplasmic-facing. Residues 158–178 (VIGRIGMVVLVRGLLLLIPFP) traverse the membrane as a helical segment. The Extracellular segment spans residues 179 to 214 (ILLGTLIFCQATIIGHAYCEHMAVVKLACSETTVNR). The helical transmembrane segment at 215 to 235 (AYGLTMALLVIGLDVLAIGVS) threads the bilayer. Over 236 to 255 (YAHILQAVLKVPGSEARLKA) the chain is Cytoplasmic. The chain crosses the membrane as a helical span at residues 256 to 276 (FSTCGSHICVILVFYVPGIFS). At 277 to 291 (FLTHRFGHHVPHHVH) the chain is on the extracellular side. The helical transmembrane segment at 292 to 312 (VLLATRYLLMPPALNPLVYGV) threads the bilayer. At 313–329 (KTQQIRQRVLRVFTQKD) the chain is on the cytoplasmic side.

Belongs to the G-protein coupled receptor 1 family.

Its subcellular location is the cell membrane. Its function is as follows. Odorant receptor. This is Olfactory receptor 52L1 (OR52L1) from Homo sapiens (Human).